Consider the following 508-residue polypeptide: UDP-N-acetylmuramoyl-L-alanyl-D-glutamate--2,6-diaminopimelate ligase (508 aa).

Ser-43 provides a ligand contact to UDP-N-acetyl-alpha-D-muramoyl-L-alanyl-D-glutamate. Position 124-130 (124-130 (GTNGKTT)) interacts with ATP. UDP-N-acetyl-alpha-D-muramoyl-L-alanyl-D-glutamate-binding positions include 166 to 167 (TT), Ser-193, and Arg-201. N6-carboxylysine is present on Lys-233. Meso-2,6-diaminopimelate contacts are provided by residues Arg-404, 428 to 431 (DNPR), Gly-478, and Glu-482. The short motif at 428–431 (DNPR) is the Meso-diaminopimelate recognition motif element.

It belongs to the MurCDEF family. MurE subfamily. The cofactor is Mg(2+). Post-translationally, carboxylation is probably crucial for Mg(2+) binding and, consequently, for the gamma-phosphate positioning of ATP.

Its subcellular location is the cytoplasm. The enzyme catalyses UDP-N-acetyl-alpha-D-muramoyl-L-alanyl-D-glutamate + meso-2,6-diaminopimelate + ATP = UDP-N-acetyl-alpha-D-muramoyl-L-alanyl-gamma-D-glutamyl-meso-2,6-diaminopimelate + ADP + phosphate + H(+). It functions in the pathway cell wall biogenesis; peptidoglycan biosynthesis. In terms of biological role, catalyzes the addition of meso-diaminopimelic acid to the nucleotide precursor UDP-N-acetylmuramoyl-L-alanyl-D-glutamate (UMAG) in the biosynthesis of bacterial cell-wall peptidoglycan. The chain is UDP-N-acetylmuramoyl-L-alanyl-D-glutamate--2,6-diaminopimelate ligase from Chlorobaculum tepidum (strain ATCC 49652 / DSM 12025 / NBRC 103806 / TLS) (Chlorobium tepidum).